Consider the following 33-residue polypeptide: Mu-theraphotoxin-Ssp1a (33 aa).

3 cysteine pairs are disulfide-bonded: cysteine 2–cysteine 17, cysteine 9–cysteine 22, and cysteine 16–cysteine 29. A Leucine amide modification is found at leucine 33.

The protein belongs to the neurotoxin 10 (Hwtx-1) family. 22 (Htx-4) subfamily. Expressed by the venom gland.

The protein localises to the secreted. In terms of biological role, gating modifier toxin that traps voltage-sensing domain II of voltage-gated sodium channels in the resting state without significantly altering the voltage-dependence of activation and inactivation, or delay in recovery from inactivation. Inhibits hNav1.7/SCN9A (IC(50)=134 nM), followed in rank order of potency by Nav1.6/SCN8A (IC(50)=191 nM), Nav1.2/SCN2A (IC(50)=239 nM), Nav1.3/SCN3A (IC(50)=547 nM) and Nav1.1/SCN1A (IC(50)=674 nM). Its binding to Nav1.2, Nav1.3 and Nav1.7 is slowly reversible and incomplete, with ~25% of Nav1.2, ~50% of Nav1.3 and ~40% of Nav1.7 channels recovering from block after a 30 minutes washout, respectively. Binds in the aqueous cleft formed between the S1-S2 and S3-S4 loops of each channel subtype, primarily targeting the S3-S4 loop. In Selenotypus sp. (Feather-legged tarantula), this protein is Mu-theraphotoxin-Ssp1a.